A 712-amino-acid chain; its full sequence is Dipeptidyl-peptidase 7 (712 aa).

An N-terminal signal peptide occupies residues 1 to 23 (MQMKLKSILLGAALLLGASGVAK). His89 functions as the Charge relay system in the catalytic mechanism. Positions 136–173 (TDKVEGQLKGITDEMERLRKAQEVCQELAKKENADENQ) form a coiled coil. Residues Asp225 and Ser648 each act as charge relay system in the active site.

This sequence belongs to the peptidase S46 family.

The protein resides in the cell outer membrane. With respect to regulation, is inhibited in vitro by typical serine protease inhibitors like diisopropyl fluorophosphate, Pefablock, and 3,4-dichloroisocoumarin, but not by typical cysteine class inhibitors such as E-64 or iododoacetic acid. Its function is as follows. Catalyzes the removal of dipeptides from the N-terminus of oligopeptides. Shows a broad specificity for both aliphatic and aromatic residues in the P1 position, with glycine or proline being not acceptable in this position. Most potently cleaves the synthetic substrate Met-Leu-methylcoumaryl-7-amide (Met-Leu-MCA), Leu-Arg-MCA and Lys-Ala-MCA to a lesser extent. Is likely involved in amino acid metabolism and bacterial growth of asaccharolytic P.gingivalis, that utilizes amino acids from extracellular proteinaceous nutrients as energy and carbon sources. In Porphyromonas gingivalis (strain ATCC 33277 / DSM 20709 / CIP 103683 / JCM 12257 / NCTC 11834 / 2561), this protein is Dipeptidyl-peptidase 7.